The sequence spans 375 residues: o-succinylbenzoate synthase (375 aa).

Lysine 166 (proton donor) is an active-site residue. Mg(2+)-binding residues include aspartate 191, glutamate 216, and aspartate 241. Lysine 265 functions as the Proton acceptor in the catalytic mechanism.

Belongs to the mandelate racemase/muconate lactonizing enzyme family. MenC type 2 subfamily. Homotetramer. A divalent metal cation is required as a cofactor.

It carries out the reaction (1R,6R)-6-hydroxy-2-succinyl-cyclohexa-2,4-diene-1-carboxylate = 2-succinylbenzoate + H2O. The catalysed reaction is N-acetyl-D-methionine = N-acetyl-L-methionine. The protein operates within quinol/quinone metabolism; 1,4-dihydroxy-2-naphthoate biosynthesis; 1,4-dihydroxy-2-naphthoate from chorismate: step 4/7. It functions in the pathway quinol/quinone metabolism; menaquinone biosynthesis. Converts 2-succinyl-6-hydroxy-2,4-cyclohexadiene-1-carboxylate (SHCHC) to 2-succinylbenzoate (OSB). Also acts as a N-succinylamino acid racemase (NSAR) that catalyzes the racemization of N-succinyl-D/L-phenylalanine. Can catalyze the racemization of a broad range of N-acylamino acids, including N-acetyl-D-methionine, N-formyl-D/L-methionine, N-formyl-D/L-norleucine, N-formyl-D/L-aminobutyric acid, N-formyl-D/L-norvaline, N-formyl-D/L-homophenylalanine, N-carbamoyl-D-methionine and N-carbamoyl-D-norleucine. May be a bifunctional enzyme involved in menaquinone biosynthesis and in an irreversible pathway for the conversion of D- to L-amino acids, thereby facilitating the survival and/or growth of the organism. In Geobacillus stearothermophilus (Bacillus stearothermophilus), this protein is o-succinylbenzoate synthase.